The chain runs to 585 residues: UvrABC system protein C (585 aa).

One can recognise a GIY-YIG domain in the interval 15–90 (AEPGVYQFLE…IKRHQPRYNV (76 aa)). Residues 198–233 (GILADPLRQEMQAAATAEEFERAANIRDRLAVIESF) form the UVR domain.

It belongs to the UvrC family. As to quaternary structure, interacts with UvrB in an incision complex.

It localises to the cytoplasm. Its function is as follows. The UvrABC repair system catalyzes the recognition and processing of DNA lesions. UvrC both incises the 5' and 3' sides of the lesion. The N-terminal half is responsible for the 3' incision and the C-terminal half is responsible for the 5' incision. This chain is UvrABC system protein C, found in Haloquadratum walsbyi (strain DSM 16790 / HBSQ001).